Consider the following 215-residue polypeptide: UPF0502 protein YceH (215 aa).

The protein belongs to the UPF0502 family.

In Salmonella paratyphi C (strain RKS4594), this protein is UPF0502 protein YceH.